The primary structure comprises 79 residues: Reactive oxygen species modulator 1 (79 aa).

Residues 22-44 traverse the membrane as a helical segment; sequence GFVMGCAVGMAAGALFGTFSCLR. Positions 42-60 are sufficient for antibacterial activity; it reads CLRIGMRGRELMGGIGKTM.

The protein belongs to the MGR2 family.

The protein localises to the mitochondrion inner membrane. Functionally, has antibacterial activity against a variety of bacteria including S.aureus, P.aeruginosa and M.tuberculosis. Acts by inducing bacterial membrane breakage. In terms of biological role, induces production of reactive oxygen species (ROS) which are necessary for cell proliferation. May play a role in inducing oxidative DNA damage and replicative senescence. May play a role in the coordination of mitochondrial morphology and cell proliferation. The sequence is that of Reactive oxygen species modulator 1 (ROMO1) from Bos taurus (Bovine).